We begin with the raw amino-acid sequence, 73 residues long: Neurotoxin Cex13 (73 aa).

Residues 1 to 7 (ATGNVWA) form the signal peptide. The 64-residue stretch at 8–71 (KDGYLVIIKT…TWPLPDKTCG (64 aa)) folds into the LCN-type CS-alpha/beta domain. Cystine bridges form between C19/C70, C23/C46, C32/C51, and C36/C53. At C70 the chain carries Cysteine amide. Residues 71–73 (GTK) constitute a propeptide that is removed on maturation.

It belongs to the long (4 C-C) scorpion toxin superfamily. Sodium channel inhibitor family. Beta subfamily. As to expression, expressed by the venom gland.

The protein resides in the secreted. Its function is as follows. Beta toxins bind voltage-independently at site-4 of sodium channels (Nav) and shift the voltage of activation toward more negative potentials thereby affecting sodium channel activation and promoting spontaneous and repetitive firing. This is Neurotoxin Cex13 from Centruroides exilicauda (Bark scorpion).